Consider the following 258-residue polypeptide: Putative ankyrin repeat domain-containing protein 30B-like (258 aa).

Positions 1-21 (MERLSAAPVKGQTGPERPSPF) are disordered. ANK repeat units lie at residues 71–100 (KKRT…QLDV), 104–133 (ENRT…DPNI), 137–166 (YGNT…DIEV), and 170–199 (AGHT…NANA). The tract at residues 216–258 (KISKNSQNSNPEGTSEGTPDEAAPLAERTPDTAESLVERTPDE) is disordered. Residues 218-232 (SKNSQNSNPEGTSEG) show a composition bias toward polar residues. Over residues 243–258 (RTPDTAESLVERTPDE) the composition is skewed to basic and acidic residues.

This Homo sapiens (Human) protein is Putative ankyrin repeat domain-containing protein 30B-like (ANKRD30BL).